The primary structure comprises 166 residues: Disulfide bond formation protein B (166 aa).

The Cytoplasmic portion of the chain corresponds to 1 to 12 (MKITKLPSYRQT). A helical membrane pass occupies residues 13–29 (ALIIFAGCVGLILAALY). The Periplasmic portion of the chain corresponds to 30 to 47 (MQEVLGLHPCPLCITQRI). Cys-39 and Cys-42 are joined by a disulfide. A helical transmembrane segment spans residues 48 to 64 (FIIGVGLISLIAAIHNP). At 65 to 70 (AALGRK) the chain is on the cytoplasmic side. Residues 71–88 (VYGCLATLSGVIGAGVSA) traverse the membrane as a helical segment. The Periplasmic segment spans residues 89-145 (RHVWLQNLPEDQVPACGPDLAYMFDAFPLLDALKLLFAGDGNCADVVASFLGLSIPG). Cys-104 and Cys-131 are disulfide-bonded. Residues 146–164 (WTFVAFVGLIAISVWQGLR) traverse the membrane as a helical segment. Residues 165–166 (KA) lie on the Cytoplasmic side of the membrane.

Belongs to the DsbB family.

It is found in the cell inner membrane. Its function is as follows. Required for disulfide bond formation in some periplasmic proteins. Acts by oxidizing the DsbA protein. The protein is Disulfide bond formation protein B of Saccharophagus degradans (strain 2-40 / ATCC 43961 / DSM 17024).